Here is a 317-residue protein sequence, read N- to C-terminus: R-phycoerythrin gamma chain, chloroplastic (317 aa).

Residues 1–40 (MASPAFAVNGMFTPVKLSGSFTASMPVDSKPAASATGVRM) constitute a chloroplast transit peptide. Positions 94 and 133 each coordinate phycourobilin. Position 210 (C210) interacts with (2R,3E)-phycoerythrobilin. C297 lines the phycourobilin pocket.

Heteromer of 1 alpha, 1 beta and 2 gamma chains. In terms of processing, contains four covalently linked bilin chromophores.

Its subcellular location is the plastid. It is found in the chloroplast thylakoid membrane. Critical for the incorporation of phycoerythrin in the phycobilisome complex. This is R-phycoerythrin gamma chain, chloroplastic from Aglaothamnion neglectum (Red alga).